We begin with the raw amino-acid sequence, 296 residues long: NAD kinase (296 aa).

Asp-78 (proton acceptor) is an active-site residue. NAD(+)-binding positions include 78–79 (DG), 152–153 (ND), Arg-180, Asp-182, and Gln-251.

The protein belongs to the NAD kinase family. The cofactor is a divalent metal cation.

It localises to the cytoplasm. The catalysed reaction is NAD(+) + ATP = ADP + NADP(+) + H(+). Functionally, involved in the regulation of the intracellular balance of NAD and NADP, and is a key enzyme in the biosynthesis of NADP. Catalyzes specifically the phosphorylation on 2'-hydroxyl of the adenosine moiety of NAD to yield NADP. The chain is NAD kinase from Neisseria gonorrhoeae (strain ATCC 700825 / FA 1090).